Reading from the N-terminus, the 83-residue chain is UPF0248 protein PYRAB10580 (83 aa).

The protein belongs to the UPF0248 family.

This Pyrococcus abyssi (strain GE5 / Orsay) protein is UPF0248 protein PYRAB10580.